The chain runs to 149 residues: Cytochrome c' (149 aa).

The signal sequence occupies residues 1–19; the sequence is MRRVLLATLMAALPAAAMA. Residues Arg-29, Thr-89, Ala-90, Cys-138, Cys-141, and His-142 each coordinate heme c.

As to quaternary structure, monomer and homodimer. Binds 1 heme c group covalently per subunit.

Its function is as follows. Cytochrome c' is the most widely occurring bacterial c-type cytochrome. Cytochromes c' are high-spin proteins and the heme has no sixth ligand. Their exact function is not known. This Cereibacter sphaeroides (strain ATCC 17023 / DSM 158 / JCM 6121 / CCUG 31486 / LMG 2827 / NBRC 12203 / NCIMB 8253 / ATH 2.4.1.) (Rhodobacter sphaeroides) protein is Cytochrome c' (cycP).